A 501-amino-acid chain; its full sequence is Probable pectate lyase 13 (501 aa).

The N-terminal stretch at 1–22 (MLLQNFSNTIFLLCLFFTLLSA) is a signal peptide. Asn27 and Asn49 each carry an N-linked (GlcNAc...) asparagine glycan. The tract at residues 55–78 (RQLSSPSSSSSSSSSSSSSSCRTG) is disordered. Positions 58-74 (SSPSSSSSSSSSSSSSS) are enriched in low complexity. Residues Asp217, Asp241, and Asp245 each coordinate Ca(2+). Arg297 is a catalytic residue. Disordered stretches follow at residues 329-359 (INSQGNRYSAPSDPSAKEVTKRVDSKDDGEW) and 408-463 (NAGV…SSGD). Over residues 343-357 (SAKEVTKRVDSKDDG) the composition is skewed to basic and acidic residues. The span at 430–449 (GGDGGGGGSSGGSSGGGMDV) shows a compositional bias: gly residues. A compositionally biased stretch (low complexity) spans 450–463 (MGGTTRGSSSSSGD). Ser474 carries the GPI-anchor amidated serine lipid modification. The propeptide at 475–501 (DAPSRPRLTLLFSLLMISVLSLSTLLL) is removed in mature form.

This sequence belongs to the polysaccharide lyase 1 family. It depends on Ca(2+) as a cofactor. Expressed equally in mature leaves, buds, flowers, rosettes and roots.

It localises to the cell membrane. It carries out the reaction Eliminative cleavage of (1-&gt;4)-alpha-D-galacturonan to give oligosaccharides with 4-deoxy-alpha-D-galact-4-enuronosyl groups at their non-reducing ends.. It participates in glycan metabolism; pectin degradation; 2-dehydro-3-deoxy-D-gluconate from pectin: step 2/5. Susceptibility factor required for infection by most powdery mildews, but not by unrelated pathogens. Exact function not known, but clearly affects cell wall composition. The sequence is that of Probable pectate lyase 13 (PMR6) from Arabidopsis thaliana (Mouse-ear cress).